Consider the following 301-residue polypeptide: MDIRDEILKLKKEKGAIILAHYYQIPEIQEIADYVGDSYYLSKIAKDCEENIIVFCGVKFMAESAKILSPEKTVILPVMEAGCVMADMATEEGLAKLKEEHPNAKVVCYINSSTEVKALSDVCCTSSNAENIINNLEEKEIIFLPDRNLGSYIQEKTPDKKFILWNGFCIVHEAIQKEEILRLKSEHEGILTVAHPECSKEIRDISDFIGSTSEIINFVNNSSNKKFIIITEEGVLHQLRKNGEEKEFYIPYGKMVCRNMKMTTLKDLYESLLKMENKIEIDEDLRLKAYNSLKNMHKLGG.

The iminosuccinate site is built by His-21 and Ser-38. Cys-83 contributes to the [4Fe-4S] cluster binding site. Iminosuccinate-binding positions include 109-111 (YIN) and Ser-126. Cys-169 contributes to the [4Fe-4S] cluster binding site. Residues 195–197 (HPE) and Thr-212 contribute to the iminosuccinate site. Cys-257 is a [4Fe-4S] cluster binding site.

It belongs to the quinolinate synthase family. Type 2 subfamily. The cofactor is [4Fe-4S] cluster.

The protein resides in the cytoplasm. The enzyme catalyses iminosuccinate + dihydroxyacetone phosphate = quinolinate + phosphate + 2 H2O + H(+). The protein operates within cofactor biosynthesis; NAD(+) biosynthesis; quinolinate from iminoaspartate: step 1/1. Its function is as follows. Catalyzes the condensation of iminoaspartate with dihydroxyacetone phosphate to form quinolinate. This chain is Quinolinate synthase, found in Clostridium perfringens (strain 13 / Type A).